We begin with the raw amino-acid sequence, 431 residues long: UDP-N-acetylmuramate--L-alanine ligase (431 aa).

Residue 108 to 114 (GAHGKST) coordinates ATP.

It belongs to the MurCDEF family.

The protein localises to the cytoplasm. It carries out the reaction UDP-N-acetyl-alpha-D-muramate + L-alanine + ATP = UDP-N-acetyl-alpha-D-muramoyl-L-alanine + ADP + phosphate + H(+). It participates in cell wall biogenesis; peptidoglycan biosynthesis. In terms of biological role, cell wall formation. In Campylobacter jejuni subsp. doylei (strain ATCC BAA-1458 / RM4099 / 269.97), this protein is UDP-N-acetylmuramate--L-alanine ligase.